Consider the following 339-residue polypeptide: MLPDLSAAPMQDRYGRPLRDLRLSVIEACNFRCGYCMPADRVPDDYGLDADQRLSFDQLETLVRAFVAVGVTKLRLTGGEPLLRKNLPVLIQRLAAIEGIEDLALTTNGALLARQAVALRQAGLRRITVSMDALEPALFRQMSGGRGEIDQVLAGIAAAEQAGFDRLKINCVVQRDVNEDQVLPLVEHFRGTGHVLRFIEFMDVGSCNGWRPEAVVTSAQLRDRIHARWPLAPLDANYTGEVAQRHAFADGLGEVGFVSSVSVPFCGDCQRARVSADGHLYTCLFASQGHDLKPALAEGEQGLATHLRQRWSVRADRYSEVRASTSRRRKPVEMFLIGG.

The 237-residue stretch at 13-249 folds into the Radical SAM core domain; the sequence is RYGRPLRDLR…GEVAQRHAFA (237 aa). Arg-22 lines the GTP pocket. Residues Cys-29 and Cys-33 each coordinate [4Fe-4S] cluster. Tyr-35 is an S-adenosyl-L-methionine binding site. A [4Fe-4S] cluster-binding site is contributed by Cys-36. A GTP-binding site is contributed by Arg-75. An S-adenosyl-L-methionine-binding site is contributed by Gly-79. A GTP-binding site is contributed by Thr-106. Ser-130 is an S-adenosyl-L-methionine binding site. Lys-168 contacts GTP. An S-adenosyl-L-methionine-binding site is contributed by Met-202. [4Fe-4S] cluster is bound by residues Cys-266 and Cys-269. Position 271-273 (271-273) interacts with GTP; the sequence is RAR. Position 283 (Cys-283) interacts with [4Fe-4S] cluster.

It belongs to the radical SAM superfamily. MoaA family. Monomer and homodimer. It depends on [4Fe-4S] cluster as a cofactor.

It catalyses the reaction GTP + AH2 + S-adenosyl-L-methionine = (8S)-3',8-cyclo-7,8-dihydroguanosine 5'-triphosphate + 5'-deoxyadenosine + L-methionine + A + H(+). The protein operates within cofactor biosynthesis; molybdopterin biosynthesis. Functionally, catalyzes the cyclization of GTP to (8S)-3',8-cyclo-7,8-dihydroguanosine 5'-triphosphate. This Xanthomonas campestris pv. campestris (strain B100) protein is GTP 3',8-cyclase.